Here is a 113-residue protein sequence, read N- to C-terminus: Endoribonuclease SymE (113 aa).

The SpoVT-AbrB domain occupies 29 to 74 (SRYPDYSRIPAITLKGQWLEAAGFATGTAVDVKVMEGCIVLTAQPP).

This sequence belongs to the SymE family.

The protein resides in the cytoplasm. Functionally, involved in the degradation and recycling of damaged RNA. It is itself a target for degradation by the ATP-dependent protease Lon. In Escherichia coli O6:K15:H31 (strain 536 / UPEC), this protein is Endoribonuclease SymE.